The sequence spans 397 residues: Acetate kinase 2 (397 aa).

Asn10 contributes to the Mg(2+) binding site. ATP is bound at residue Lys17. Substrate is bound at residue Arg90. Asp147 serves as the catalytic Proton donor/acceptor. ATP contacts are provided by residues 207-211 (HLGNG), 281-283 (DAR), and 329-333 (GIGEN). Glu385 is a Mg(2+) binding site.

Belongs to the acetokinase family. As to quaternary structure, homodimer. Requires Mg(2+) as cofactor. The cofactor is Mn(2+).

The protein localises to the cytoplasm. The enzyme catalyses acetate + ATP = acetyl phosphate + ADP. Its pathway is metabolic intermediate biosynthesis; acetyl-CoA biosynthesis; acetyl-CoA from acetate: step 1/2. Functionally, catalyzes the formation of acetyl phosphate from acetate and ATP. Can also catalyze the reverse reaction. This chain is Acetate kinase 2, found in Vibrio parahaemolyticus serotype O3:K6 (strain RIMD 2210633).